A 985-amino-acid chain; its full sequence is Probable beta-galactosidase C (985 aa).

Positions 1–23 are cleaved as a signal peptide; that stretch reads MRILSLLFLLLLGFLAGNRVVSA. Tyrosine 82, asparagine 127, alanine 128, glutamate 129, and asparagine 187 together coordinate substrate. Residue glutamate 188 is the Proton donor of the active site. Substrate is bound at residue tyrosine 251. A disulfide bridge links cysteine 257 with cysteine 304. Asparagine 276 carries N-linked (GlcNAc...) asparagine glycosylation. Glutamate 287 functions as the Nucleophile in the catalytic mechanism. Tyrosine 353 is a substrate binding site. 8 N-linked (GlcNAc...) asparagine glycosylation sites follow: asparagine 391, asparagine 434, asparagine 517, asparagine 602, asparagine 677, asparagine 715, asparagine 720, and asparagine 759.

Belongs to the glycosyl hydrolase 35 family.

Its subcellular location is the secreted. The catalysed reaction is Hydrolysis of terminal non-reducing beta-D-galactose residues in beta-D-galactosides.. In terms of biological role, cleaves beta-linked terminal galactosyl residues from gangliosides, glycoproteins, and glycosaminoglycans. The polypeptide is Probable beta-galactosidase C (lacC) (Aspergillus clavatus (strain ATCC 1007 / CBS 513.65 / DSM 816 / NCTC 3887 / NRRL 1 / QM 1276 / 107)).